A 796-amino-acid chain; its full sequence is Vacuolar protein sorting-associated protein 35 (796 aa).

At S7 the chain carries Phosphoserine. Interaction with SNX3 stretches follow at residues 25-44 and 205-215; these read VQSF…DALK and DREKRERERQE. The interval 438 to 796 is interaction with SLC11A2; sequence CYVLSNVLDY…EGPIYEGLIL (359 aa). Positions 500 to 693 are interaction with IGF2R cytoplasmic domain; it reads SDDPDQQYLI…DKNGEELHGG (194 aa). Residues 776–796 form a disordered region; it reads HLRSRRESPESEGPIYEGLIL. S783 is modified (phosphoserine). The residue at position 791 (Y791) is a Phosphotyrosine.

The protein belongs to the VPS35 family. Component of the heterotrimeric retromer cargo-selective complex (CSC), also described as vacuolar protein sorting subcomplex (VPS) formed by VPS26 (VPS26A or VPS26B), VPS29 and VPS35. The CSC has a highly elongated structure with VPS26 and VPS29 binding independently at opposite distal ends of VPS35 as central platform. The CSC is believed to associate with variable sorting nexins to form functionally distinct retromer complex variants. The originally described retromer complex (also called SNX-BAR retromer) is a pentamer containing the CSC and a heterodimeric membrane-deforming subcomplex formed between SNX1 or SNX2 and SNX5 or SNX6 (also called SNX-BAR subcomplex); the affinity between the respective CSC and SNX-BAR subcomplexes is low. The CSC associates with SNX3 to form a SNX3-retromer complex. The CSC associates with SNX27, the WASH complex and the SNX-BAR subcomplex to form the SNX27-retromer complex. Interacts with VPS26A, VPS29, VPS26B and LRRK2. Interacts with SNX1, SNX2, IGF2R, SNX3, GOLPH3, SLC11A2, WASHC2, FKBP15, WASHC1, EHD1. Interacts with MAGEL2; leading to recruitment of the TRIM27:MAGEL2 E3 ubiquitin ligase complex retromer-containing endosomes. Interacts with SORCS2. In terms of tissue distribution, detected in striatum (at protein level). Ubiquitous. Highly expressed in fat tissue, testis, brain, kidney, thymus, liver and pancreas, and at lower levels in heart, intestine and skeletal muscle. Detected in oocytes, pre-implantation embryos and at 6.5-12.5 dpc.

The protein localises to the cytoplasm. It localises to the membrane. It is found in the endosome. The protein resides in the early endosome. Its subcellular location is the late endosome. Functionally, acts as a component of the retromer cargo-selective complex (CSC). The CSC is believed to be the core functional component of retromer or respective retromer complex variants acting to prevent missorting of selected transmembrane cargo proteins into the lysosomal degradation pathway. The recruitment of the CSC to the endosomal membrane involves RAB7A and SNX3. The CSC seems to associate with the cytoplasmic domain of cargo proteins predominantly via VPS35; however, these interactions seem to be of low affinity and retromer SNX proteins may also contribute to cargo selectivity thus questioning the classical function of the CSC. The SNX-BAR retromer mediates retrograde transport of cargo proteins from endosomes to the trans-Golgi network (TGN) and is involved in endosome-to-plasma membrane transport for cargo protein recycling. The SNX3-retromer mediates the retrograde transport of WLS distinct from the SNX-BAR retromer pathway. The SNX27-retromer is believed to be involved in endosome-to-plasma membrane trafficking and recycling of a broad spectrum of cargo proteins. The CSC seems to act as recruitment hub for other proteins, such as the WASH complex and TBC1D5. Required for retrograde transport of lysosomal enzyme receptor IGF2R and SLC11A2. Required to regulate transcytosis of the polymeric immunoglobulin receptor (pIgR-pIgA). Required for endosomal localization of WASHC2 and mediates the association of the CSC with the WASH complex. The chain is Vacuolar protein sorting-associated protein 35 (Vps35) from Mus musculus (Mouse).